Here is a 557-residue protein sequence, read N- to C-terminus: Formate--tetrahydrofolate ligase 2 (557 aa).

66–73 provides a ligand contact to ATP; sequence TPAGEGKT.

The protein belongs to the formate--tetrahydrofolate ligase family.

The enzyme catalyses (6S)-5,6,7,8-tetrahydrofolate + formate + ATP = (6R)-10-formyltetrahydrofolate + ADP + phosphate. It participates in one-carbon metabolism; tetrahydrofolate interconversion. The protein is Formate--tetrahydrofolate ligase 2 of Streptococcus pyogenes serotype M12 (strain MGAS9429).